A 269-amino-acid chain; its full sequence is 4-hydroxy-tetrahydrodipicolinate reductase (269 aa).

Residues Gly9 to Met14, Asp35, Gly102 to Thr104, and Ala128 to Phe131 contribute to the NAD(+) site. Residue His158 is the Proton donor/acceptor of the active site. A (S)-2,3,4,5-tetrahydrodipicolinate-binding site is contributed by His159. The active-site Proton donor is the Lys162. Gly168–Thr169 contributes to the (S)-2,3,4,5-tetrahydrodipicolinate binding site.

The protein belongs to the DapB family.

Its subcellular location is the cytoplasm. The catalysed reaction is (S)-2,3,4,5-tetrahydrodipicolinate + NAD(+) + H2O = (2S,4S)-4-hydroxy-2,3,4,5-tetrahydrodipicolinate + NADH + H(+). It catalyses the reaction (S)-2,3,4,5-tetrahydrodipicolinate + NADP(+) + H2O = (2S,4S)-4-hydroxy-2,3,4,5-tetrahydrodipicolinate + NADPH + H(+). It functions in the pathway amino-acid biosynthesis; L-lysine biosynthesis via DAP pathway; (S)-tetrahydrodipicolinate from L-aspartate: step 4/4. Catalyzes the conversion of 4-hydroxy-tetrahydrodipicolinate (HTPA) to tetrahydrodipicolinate. The chain is 4-hydroxy-tetrahydrodipicolinate reductase from Gloeobacter violaceus (strain ATCC 29082 / PCC 7421).